We begin with the raw amino-acid sequence, 330 residues long: Tetraacyldisaccharide 4'-kinase (330 aa).

Position 58-65 (58-65 (TVGGSGKT)) interacts with ATP.

It belongs to the LpxK family.

It catalyses the reaction a lipid A disaccharide + ATP = a lipid IVA + ADP + H(+). Its pathway is glycolipid biosynthesis; lipid IV(A) biosynthesis; lipid IV(A) from (3R)-3-hydroxytetradecanoyl-[acyl-carrier-protein] and UDP-N-acetyl-alpha-D-glucosamine: step 6/6. Transfers the gamma-phosphate of ATP to the 4'-position of a tetraacyldisaccharide 1-phosphate intermediate (termed DS-1-P) to form tetraacyldisaccharide 1,4'-bis-phosphate (lipid IVA). This Shewanella halifaxensis (strain HAW-EB4) protein is Tetraacyldisaccharide 4'-kinase.